A 784-amino-acid polypeptide reads, in one-letter code: Toll-like receptor 2 (784 aa).

A signal peptide spans 1 to 20 (MPHTLWMVWVLGVIISLSKE). Residues 21 to 588 (ESSNQASLSC…RLSVSECHRT (568 aa)) lie on the Extracellular side of the membrane. Cys30 and Cys36 form a disulfide bridge. LRR repeat units lie at residues 54–77 (VKSL…RCVN), 78–101 (LQAL…SLGS), 102–125 (LEHL…PLSS), 126–150 (LTFL…HLTK), 151–175 (LQIL…GLTF), 176–199 (LEEL…SIQN), 200–223 (VSHL…VTSS), 224–250 (VECL…TNSL), 251–278 (IKKF…QISG), 279–308 (LLEL…DPGK), 309–337 (VETL…LTER), 338–361 (VKRI…HLKS), 362–388 (LEYL…AWPS), 389–414 (LQTL…TLKN), 415–437 (LTNI…WPEK), 438–457 (MKYL…CIPK), 458–478 (TLEI…NLPQ), 479–500 (LKEL…LLPM), and 501–524 (LLVL…SFHT). The N-linked (GlcNAc...) asparagine glycan is linked to Asn114. A glycan (N-linked (GlcNAc...) asparagine) is linked at Asn199. Residues Cys353 and Cys382 are joined by a disulfide bond. Asn414 is a glycosylation site (N-linked (GlcNAc...) asparagine). The cysteines at positions 432 and 454 are disulfide-linked. An N-linked (GlcNAc...) asparagine glycan is attached at Asn442. The 55-residue stretch at 525 to 579 (LKTLEAGGNNFICSCEFLSFTQEQQALAKVLIDWPANYLCDSPSHVRGQQVQDVR) folds into the LRRCT domain. The helical transmembrane segment at 589–609 (ALVSGMCCALFLLILLTGVLC) threads the bilayer. Residues 610–784 (HRFHGLWYMK…WVNLRAAIKS (175 aa)) are Cytoplasmic-facing. Residues 639 to 782 (ICYDAFVSYS…GFWVNLRAAI (144 aa)) form the TIR domain. Residue Lys754 forms a Glycyl lysine isopeptide (Lys-Gly) (interchain with G-Cter in ubiquitin) linkage. An ATG16L1-binding motif motif is present at residues 761–778 (YLEWPMDEAQREGFWVNL).

Belongs to the Toll-like receptor family. As to quaternary structure, interacts with LY96, TLR1 and TLR6 (via extracellular domain). TLR2 seems to exist in heterodimers with either TLR1 or TLR6 before stimulation by the ligand. The heterodimers form bigger oligomers in response to their corresponding ligands as well as further heterotypic associations with other receptors such as CD14 and/or CD36. Binds MYD88 (via TIR domain). Interacts with TICAM1. Interacts with CNPY3. Interacts with ATG16L1. Interacts with PPP1R11. Interacts with TICAM2. Interacts with TIRAP. In terms of assembly, (Microbial infection) Interacts with M.tuberculosis EsxA. (Microbial infection) Interacts with M.bovis MPB83. As to quaternary structure, (Microbial infection) Interacts with Staphylococcus aureus protein SSL5. Post-translationally, glycosylation of Asn-442 is critical for secretion of the N-terminal ectodomain of TLR2. In terms of processing, ubiquitinated at Lys-754 by PPP1R11, leading to its degradation. Deubiquitinated by USP2. As to expression, highly expressed in peripheral blood leukocytes, in particular in monocytes, in bone marrow, lymph node and in spleen. Also detected in lung and in fetal liver. Levels are low in other tissues.

The protein resides in the membrane. It localises to the cytoplasmic vesicle. The protein localises to the phagosome membrane. Its subcellular location is the membrane raft. Cooperates with LY96 to mediate the innate immune response to bacterial lipoproteins and other microbial cell wall components. Cooperates with TLR1 or TLR6 to mediate the innate immune response to bacterial lipoproteins or lipopeptides. Acts via MYD88 and TRAF6, leading to NF-kappa-B activation, cytokine secretion and the inflammatory response. May also activate immune cells and promote apoptosis in response to the lipid moiety of lipoproteins. Recognizes mycoplasmal macrophage-activating lipopeptide-2kD (MALP-2), soluble tuberculosis factor (STF), phenol-soluble modulin (PSM) and B.burgdorferi outer surface protein A lipoprotein (OspA-L) cooperatively with TLR6. Stimulation of monocytes in vitro with M.tuberculosis PstS1 induces p38 MAPK and ERK1/2 activation primarily via this receptor, but also partially via TLR4. MAPK activation in response to bacterial peptidoglycan also occurs via this receptor. Acts as a receptor for M.tuberculosis lipoproteins LprA, LprG, LpqH and PstS1, some lipoproteins are dependent on other coreceptors (TLR1, CD14 and/or CD36); the lipoproteins act as agonists to modulate antigen presenting cell functions in response to the pathogen. M.tuberculosis HSP70 (dnaK) but not HSP65 (groEL-2) acts via this protein to stimulate NF-kappa-B expression. Recognizes M.tuberculosis major T-antigen EsxA (ESAT-6) which inhibits downstream MYD88-dependent signaling (shown in mouse). Forms activation clusters composed of several receptors depending on the ligand, these clusters trigger signaling from the cell surface and subsequently are targeted to the Golgi in a lipid-raft dependent pathway. Forms the cluster TLR2:TLR6:CD14:CD36 in response to diacylated lipopeptides and TLR2:TLR1:CD14 in response to triacylated lipopeptides. Required for normal uptake of M.tuberculosis, a process that is inhibited by M.tuberculosis LppM. The chain is Toll-like receptor 2 from Homo sapiens (Human).